The primary structure comprises 500 residues: Mucin-like protein 3 (500 aa).

Residues 1 to 27 (MAQPTSGLYSTFGFFICLLFFPASWEA) form the signal peptide. Residues 28 to 429 (GANTFQELQK…GENNSFPVWA (402 aa)) are Extracellular-facing. Disordered stretches follow at residues 55 to 198 (THRA…SQKP) and 275 to 324 (EGKT…PTAS). Positions 58–71 (ASSDQKTSRQHPPD) are enriched in basic and acidic residues. Positions 76-89 (TATQKAKNQCNTTR) are enriched in polar residues. A glycan (N-linked (GlcNAc...) asparagine) is linked at Asn-108. Composition is skewed to basic and acidic residues over residues 111-123 (VRHE…EKDL) and 132-142 (ARNERSADDPR). Residue Asn-148 is glycosylated (N-linked (GlcNAc...) asparagine). Polar residues-rich tracts occupy residues 159–178 (PRRN…TTKS), 279–289 (SPASESSSQAQ), and 298–324 (TSAS…PTAS). The helical transmembrane segment at 430–450 (IVIVILMAVIILLVFIGLILL) threads the bilayer. The Cytoplasmic segment spans residues 451 to 500 (VSCASRARHVLTQNSEEPEPQPEDKGSRNSYPVYLMEQQNLNLNQIPSPP).

It localises to the cell membrane. It is found in the cytoplasm. In terms of biological role, may modulate NF-kappaB signaling and play a role in cell growth. This is Mucin-like protein 3 from Mus musculus (Mouse).